We begin with the raw amino-acid sequence, 219 residues long: Ribose-5-phosphate isomerase A (219 aa).

Substrate is bound by residues 28–31, 81–84, and 94–97; these read TGST, DGAD, and KGGG. The active-site Proton acceptor is the Glu-103. Lys-121 is a binding site for substrate.

The protein belongs to the ribose 5-phosphate isomerase family. As to quaternary structure, homodimer.

The enzyme catalyses aldehydo-D-ribose 5-phosphate = D-ribulose 5-phosphate. It functions in the pathway carbohydrate degradation; pentose phosphate pathway; D-ribose 5-phosphate from D-ribulose 5-phosphate (non-oxidative stage): step 1/1. In terms of biological role, catalyzes the reversible conversion of ribose-5-phosphate to ribulose 5-phosphate. This chain is Ribose-5-phosphate isomerase A, found in Shewanella sp. (strain MR-4).